We begin with the raw amino-acid sequence, 671 residues long: RNA polymerase sigma factor RpoD (671 aa).

2 disordered regions span residues 1–45 (MKKK…SKIK) and 229–260 (DDDE…VSEK). A compositionally biased stretch (basic and acidic residues) spans 251-260 (EERKKVVSEK). A sigma-70 factor domain-2 region spans residues 436-506 (MAKSNLRLVV…SRAIADQART (71 aa)). Residues 460-463 (DLIQ) carry the Interaction with polymerase core subunit RpoC motif. The interval 515–591 (DTINRINKVM…DKNIVSSIDH (77 aa)) is sigma-70 factor domain-3. Positions 604-658 (VLDQLNEREKAVIRMRFGLLDDESDRTLEEIGKELNVTRERVRQIESSAIKKLRS) are sigma-70 factor domain-4. The segment at residues 631–650 (LEEIGKELNVTRERVRQIES) is a DNA-binding region (H-T-H motif).

The protein belongs to the sigma-70 factor family. RpoD/SigA subfamily. Interacts transiently with the RNA polymerase catalytic core.

The protein resides in the cytoplasm. Functionally, sigma factors are initiation factors that promote the attachment of RNA polymerase to specific initiation sites and are then released. This sigma factor is the primary sigma factor during exponential growth. This is RNA polymerase sigma factor RpoD from Helicobacter pylori (strain ATCC 700392 / 26695) (Campylobacter pylori).